A 154-amino-acid polypeptide reads, in one-letter code: SsrA-binding protein (154 aa).

This sequence belongs to the SmpB family.

It is found in the cytoplasm. Its function is as follows. Required for rescue of stalled ribosomes mediated by trans-translation. Binds to transfer-messenger RNA (tmRNA), required for stable association of tmRNA with ribosomes. tmRNA and SmpB together mimic tRNA shape, replacing the anticodon stem-loop with SmpB. tmRNA is encoded by the ssrA gene; the 2 termini fold to resemble tRNA(Ala) and it encodes a 'tag peptide', a short internal open reading frame. During trans-translation Ala-aminoacylated tmRNA acts like a tRNA, entering the A-site of stalled ribosomes, displacing the stalled mRNA. The ribosome then switches to translate the ORF on the tmRNA; the nascent peptide is terminated with the 'tag peptide' encoded by the tmRNA and targeted for degradation. The ribosome is freed to recommence translation, which seems to be the essential function of trans-translation. This chain is SsrA-binding protein, found in Treponema denticola (strain ATCC 35405 / DSM 14222 / CIP 103919 / JCM 8153 / KCTC 15104).